Consider the following 191-residue polypeptide: Lipid A acyltransferase PagP (191 aa).

The signal sequence occupies residues 1-26 (MLKVNKYVILIIAFVSQMMFSTTAQA). Active-site residues include histidine 63, aspartate 106, and serine 107.

It belongs to the lipid A palmitoyltransferase family. Homodimer.

It is found in the cell outer membrane. It catalyses the reaction a lipid A + a 1,2-diacyl-sn-glycero-3-phosphocholine = a hepta-acyl lipid A + a 2-acyl-sn-glycero-3-phosphocholine. The enzyme catalyses a lipid IVA + a 1,2-diacyl-sn-glycero-3-phosphocholine = a lipid IVB + a 2-acyl-sn-glycero-3-phosphocholine. It carries out the reaction a lipid IIA + a 1,2-diacyl-sn-glycero-3-phosphocholine = a lipid IIB + a 2-acyl-sn-glycero-3-phosphocholine. Transfers a fatty acid residue from the sn-1 position of a phospholipid to the N-linked hydroxyfatty acid chain on the proximal unit of lipid A or its precursors. The polypeptide is Lipid A acyltransferase PagP (Enterobacter lignolyticus (strain SCF1)).